Consider the following 349-residue polypeptide: Phosphate acyltransferase (349 aa).

This sequence belongs to the PlsX family. As to quaternary structure, homodimer. Probably interacts with PlsY.

It is found in the cytoplasm. It catalyses the reaction a fatty acyl-[ACP] + phosphate = an acyl phosphate + holo-[ACP]. It participates in lipid metabolism; phospholipid metabolism. Its function is as follows. Catalyzes the reversible formation of acyl-phosphate (acyl-PO(4)) from acyl-[acyl-carrier-protein] (acyl-ACP). This enzyme utilizes acyl-ACP as fatty acyl donor, but not acyl-CoA. The polypeptide is Phosphate acyltransferase (Rhodopseudomonas palustris (strain BisA53)).